The sequence spans 762 residues: Probable inorganic carbon transporter subunit DabA (762 aa).

Zn(2+) is bound by residues C279, D281, H461, and C476.

This sequence belongs to the inorganic carbon transporter (TC 9.A.2) DabA family. Forms a complex with DabB. Zn(2+) serves as cofactor.

Its subcellular location is the cell inner membrane. Part of an energy-coupled inorganic carbon pump. This is Probable inorganic carbon transporter subunit DabA from Legionella pneumophila (strain Lens).